We begin with the raw amino-acid sequence, 376 residues long: MSSVSGVRTPRERRSALRSLLRKRRQRELASKVASTVNGATSANNHGEPPSPADARPRLTLHDLHDIFREHPELELKYLNMMKMAITGKESICLPFNFHSHRQHTCLDISPYGNEQVSRIACTSCEDNRILPTASDAMVAFINQTSNIMKNRNFYYGFCKSSELLKLSTNQPPIFQIYYLLHAANHDIVPFMHAENGRLHMHVIFENSDVHIPCDCITQMLTAAREDYSVTLNIVRDHVVISVLCHAVSASSVKIDVTILQRKIDEMDIPNDVSESFERYKELIQELCQSSGNNLYEEATSSYAIRSPLTASPLHVVSTNGCGPSSSSQSTPPHLHPPSQATQPHHYSHHQSQSQQHHHRPQSPPPPLFLNSIRAP.

A Phosphoserine modification is found at Ser-19. A disordered region spans residues 22–57; that stretch reads RKRRQRELASKVASTVNGATSANNHGEPPSPADARP. Polar residues predominate over residues 33-45; it reads VASTVNGATSANN. A CCCH-type zinc finger spans residues 106–211; sequence CLDISPYGNE…HVIFENSDVH (106 aa). Residues 316–376 are disordered; that stretch reads VVSTNGCGPS…PLFLNSIRAP (61 aa). Residues 317–332 show a composition bias toward polar residues; sequence VSTNGCGPSSSSQSTP.

It belongs to the herpesviridae NEC1 protein family. Forms a heterohexameric complex with NEC2. Interacts with capsid vertex specific component 2/CVC2; this interaction directs the capsid to the host inner nuclear membrane to initiate budding. Phosphorylated at serine residues in the N-terminus. This phosphorylation regulates the localization within the inner nuclear membrane. Phosphorylation by viral kinase UL97 at Ser-19 plays an important role for correct viral nuclear egress complex (NEC) localization.

The protein resides in the host nucleus inner membrane. Plays an essential role in virion nuclear egress, the first step of virion release from infected cell. Within the host nucleus, NEC1 interacts with the newly formed capsid through the vertexes and directs it to the inner nuclear membrane by associating with NEC2. Induces the budding of the capsid at the inner nuclear membrane as well as its envelopment into the perinuclear space. There, the NEC1/NEC2 complex promotes the fusion of the enveloped capsid with the outer nuclear membrane and the subsequent release of the viral capsid into the cytoplasm where it will reach the secondary budding sites in the host Golgi or trans-Golgi network. This chain is Nuclear egress protein 1, found in Homo sapiens (Human).